Here is a 276-residue protein sequence, read N- to C-terminus: 2-dehydro-3-deoxyphosphooctonate aldolase (276 aa).

This sequence belongs to the KdsA family.

It is found in the cytoplasm. It catalyses the reaction D-arabinose 5-phosphate + phosphoenolpyruvate + H2O = 3-deoxy-alpha-D-manno-2-octulosonate-8-phosphate + phosphate. Its pathway is carbohydrate biosynthesis; 3-deoxy-D-manno-octulosonate biosynthesis; 3-deoxy-D-manno-octulosonate from D-ribulose 5-phosphate: step 2/3. The protein operates within bacterial outer membrane biogenesis; lipopolysaccharide biosynthesis. This is 2-dehydro-3-deoxyphosphooctonate aldolase from Xanthomonas oryzae pv. oryzae (strain MAFF 311018).